A 323-amino-acid polypeptide reads, in one-letter code: Acetyl-coenzyme A carboxylase carboxyl transferase subunit alpha (323 aa).

In terms of domain architecture, CoA carboxyltransferase C-terminal spans 35–296 (EVLSELDELR…GMTLKKCLDE (262 aa)).

It belongs to the AccA family. Acetyl-CoA carboxylase is a heterohexamer composed of biotin carboxyl carrier protein (AccB), biotin carboxylase (AccC) and two subunits each of ACCase subunit alpha (AccA) and ACCase subunit beta (AccD).

The protein localises to the cytoplasm. The catalysed reaction is N(6)-carboxybiotinyl-L-lysyl-[protein] + acetyl-CoA = N(6)-biotinyl-L-lysyl-[protein] + malonyl-CoA. It participates in lipid metabolism; malonyl-CoA biosynthesis; malonyl-CoA from acetyl-CoA: step 1/1. Its function is as follows. Component of the acetyl coenzyme A carboxylase (ACC) complex. First, biotin carboxylase catalyzes the carboxylation of biotin on its carrier protein (BCCP) and then the CO(2) group is transferred by the carboxyltransferase to acetyl-CoA to form malonyl-CoA. This Aquifex aeolicus (strain VF5) protein is Acetyl-coenzyme A carboxylase carboxyl transferase subunit alpha.